Consider the following 367-residue polypeptide: Biotin--protein ligase 1, chloroplastic (367 aa).

The transit peptide at 1 to 37 (MEAVRSTTTLSNFHLLNILVLRSLKPLHRLSFSFSAS) directs the protein to the chloroplast. The BPL/LPL catalytic domain maps to 105–289 (IITHRFGRFL…KFEKFFDLFM (185 aa)). Biotin is bound by residues 122–124 (STH), Q145, 149–151 (RGR), and K220.

The protein belongs to the biotin--protein ligase family. As to expression, expressed in roots, leaves, stems, flowers, siliques and seeds.

The protein localises to the plastid. The protein resides in the chloroplast. Its subcellular location is the cytoplasm. It localises to the cytosol. It carries out the reaction apo-[3-methylcrotonoyl-CoA:carbon-dioxide ligase (ADP-forming)] + biotin + ATP = holo-[3-methylcrotonoyl-CoA:carbon-dioxide ligase (ADP-forming)] + AMP + diphosphate + H(+). The enzyme catalyses biotin + L-lysyl-[protein] + ATP = N(6)-biotinyl-L-lysyl-[protein] + AMP + diphosphate + H(+). Its function is as follows. Plays a major role in biotin-dependent carboxylase biotinylation. Catalyzes the addition of biotin to the biotin carboxyl carrier protein (BCCP) subunit of acetyl-CoA carboxylase. Can also biotinylate methylcrotonyl-CoA carboxylase. Is responsible for most, if not all, biotin--protein ligase activity in Arabidopsis. Is essential for plant viability and required for ovule development. The protein is Biotin--protein ligase 1, chloroplastic of Arabidopsis thaliana (Mouse-ear cress).